Consider the following 359-residue polypeptide: MIALPQDRMDQLLKRFSMIESQMANNPDSDTYVKLASEYSELQDVVGKIRELSDARMEASDLAAMRDDASTDAEMRALAVEELPEVEKRIAVLEQDVQILLLPKDAADDKNAILEIRAGTGGLEAALFAGDLFRMYERYAAEKGWRVELVSASEGDAGGYKEIITTVSGKGVFSKLKFESGVHRVQRVPETEAGGRIHTSAATVAVLPEAEDIDIEIRNEDIRIDTMRASGAGGQHVNTTDSAVRITHIPTGIMVVQAEKSQHQNRARAMQILRARLYDMERQKAESERSQARRSQVGSGDRSERIRTYNFPQGRVTDHRINLTLYKLDRVMEGDLDELVDALISDHQTALLAELGEQP.

The residue at position 235 (Gln-235) is an N5-methylglutamine. The disordered stretch occupies residues 283–309; sequence QKAESERSQARRSQVGSGDRSERIRTY.

It belongs to the prokaryotic/mitochondrial release factor family. In terms of processing, methylated by PrmC. Methylation increases the termination efficiency of RF1.

It is found in the cytoplasm. Peptide chain release factor 1 directs the termination of translation in response to the peptide chain termination codons UAG and UAA. The chain is Peptide chain release factor 1 from Brucella suis (strain ATCC 23445 / NCTC 10510).